Consider the following 150-residue polypeptide: Putative pre-16S rRNA nuclease (150 aa).

It belongs to the YqgF nuclease family.

It localises to the cytoplasm. Could be a nuclease involved in processing of the 5'-end of pre-16S rRNA. In Chlamydia felis (strain Fe/C-56) (Chlamydophila felis), this protein is Putative pre-16S rRNA nuclease.